We begin with the raw amino-acid sequence, 507 residues long: Alkyl hydroperoxide reductase subunit F (507 aa).

207–222 (DVLIVGGGPASGSAAI) contacts FAD. A disulfide bridge connects residues C335 and C338. NAD(+) is bound at residue 347–361 (DVAVIGGGNSGVEAA). 467–477 (TNVPGIFAAGD) is an FAD binding site.

Belongs to the class-II pyridine nucleotide-disulfide oxidoreductase family. As to quaternary structure, homodimer. The cofactor is FAD.

Serves to protect the cell against DNA damage by alkyl hydroperoxides. It can use either NADH or NADPH as electron donor for direct reduction of redox dyes or of alkyl hydroperoxides when combined with the AhpC protein. The protein is Alkyl hydroperoxide reductase subunit F (ahpF) of Staphylococcus aureus (strain Mu50 / ATCC 700699).